The chain runs to 452 residues: Deoxybrevianamide E synthase notF (452 aa).

The span at 1 to 19 (MTAPELRVDTFRAPEDAPK) shows a compositional bias: basic and acidic residues. Residues 1–38 (MTAPELRVDTFRAPEDAPKEPSAQQPRLPSSPSPAQAL) are disordered. The segment covering 21–38 (PSAQQPRLPSSPSPAQAL) has biased composition (low complexity). Residue Glu-108 coordinates brevianamide F. Positions 122, 212, 214, 282, 284, 371, 436, and 440 each coordinate dimethylallyl diphosphate.

This sequence belongs to the tryptophan dimethylallyltransferase family. In terms of assembly, monomer.

It carries out the reaction brevianamide F + dimethylallyl diphosphate = deoxybrevianamide E + diphosphate. The protein operates within alkaloid biosynthesis. Its activity is regulated as follows. Addition of 5 mM Mg(2+), Ca(2+) or Mn(2+) slightly enhances catalysis (about 100-120%). Significant reduction of enzyme activity (2%-35%) is observed with Cu(2+), Zn(2+), Fe(2+), or Sn(2+) (5 mM). Functionally, deoxybrevianamide E synthase; part of the gene cluster that mediates the biosynthesis of notoamide, a fungal indole alkaloid that belongs to a family of natural products containing a characteristic bicyclo[2.2.2]diazaoctane core. The first step of notoamide biosynthesis involves coupling of L-proline and L-tryptophan by the bimodular NRPS notE, to produce cyclo-L-tryptophan-L-proline called brevianamide F. The reverse prenyltransferase notF then acts as a deoxybrevianamide E synthase and converts brevianamide F to deoxybrevianamide E via reverse prenylation at C-2 of the indole ring leading to the bicyclo[2.2.2]diazaoctane core. Deoxybrevianamide E is further hydroxylated at C-6 of the indole ring, likely catalyzed by the cytochrome P450 monooxygenase notG, to yield 6-hydroxy-deoxybrevianamide E. 6-hydroxy-deoxybrevianamide E is a specific substrate of the prenyltransferase notC for normal prenylation at C-7 to produce 6-hydroxy-7-prenyl-deoxybrevianamide, also called notoamide S. As the proposed pivotal branching point in notoamide biosynthesis, notoamide S can be diverted to notoamide E through an oxidative pyran ring closure putatively catalyzed by either notH cytochrome P450 monooxygenase or the notD FAD-linked oxidoreductase. This step would be followed by an indole 2,3-epoxidation-initiated pinacol-like rearrangement catalyzed by the notB FAD-dependent monooxygenase leading to the formation of notoamide C and notoamide D. On the other hand notoamide S is converted to notoamide T by notH (or notD), a bifunctional oxidase that also functions as the intramolecular Diels-Alderase responsible for generation of (+)-notoamide T. To generate antipodal (-)-notoaminide T, notH' (or notD') in Aspergillus versicolor is expected to catalyze a Diels-Alder reaction leading to the opposite stereochemistry. The remaining oxidoreductase notD (or notH) likely catalyzes the oxidative pyran ring formation to yield (+)-stephacidin A. The FAD-dependent monooxygenase notI is highly similar to notB and is predicted to catalyze a similar conversion from (+)-stephacidin A to (-)-notoamide B via the 2,3-epoxidation of (+)-stephacidin A followed by a pinacol-type rearrangement. Finally, it remains unclear which enzyme could be responsible for the final hydroxylation steps leading to notoamide A and sclerotiamide. The polypeptide is Deoxybrevianamide E synthase notF (Aspergillus sp. (strain MF297-2)).